The chain runs to 267 residues: GTP cyclohydrolase FolE2 (267 aa).

This sequence belongs to the GTP cyclohydrolase IV family.

It catalyses the reaction GTP + H2O = 7,8-dihydroneopterin 3'-triphosphate + formate + H(+). It functions in the pathway cofactor biosynthesis; 7,8-dihydroneopterin triphosphate biosynthesis; 7,8-dihydroneopterin triphosphate from GTP: step 1/1. Functionally, converts GTP to 7,8-dihydroneopterin triphosphate. The chain is GTP cyclohydrolase FolE2 from Nitrosococcus oceani (strain ATCC 19707 / BCRC 17464 / JCM 30415 / NCIMB 11848 / C-107).